A 266-amino-acid polypeptide reads, in one-letter code: Short-chain dehydrogenase/reductase tropE (266 aa).

The NADP(+) site is built by Leu18, Asp69, and Asn96. Ser147 (proton donor) is an active-site residue. 3 residues coordinate NADP(+): Tyr181, Lys185, and Thr216. Residue Tyr181 is the Proton acceptor of the active site. The active-site Lowers pKa of active site Tyr is the Lys185.

It belongs to the short-chain dehydrogenases/reductases (SDR) family.

The protein operates within secondary metabolite biosynthesis. In terms of biological role, short-chain dehydrogenase/reductase; part of the gene cluster that mediates the biosynthesis of the tropolone class of fungal maleic anhydrides. The pathway begins with the synthesis of 3-methylorcinaldehyde by the non-reducing polyketide synthase (PKS) tropA. 3-methylorcinaldehyde is the substrate for the FAD-dependent monooxygenase tropB to yield a dearomatized hydroxycyclohexadione. The 2-oxoglutarate-dependent dioxygenase tropC then performs the oxidative ring expansion to provide the first tropolone metabolite stipitaldehyde. Trop D converts stipitaldehyde into stipitacetal which is in turn converted to stipitalide by the short-chain dehydrogenase/reductase tropE. The next steps involve tropF, tropG, tropH, tropI and tropJ to form successive tropolone maleic anhydrides including stipitaldehydic, stipitatonic and stipitatic acids. This chain is Short-chain dehydrogenase/reductase tropE, found in Talaromyces stipitatus (strain ATCC 10500 / CBS 375.48 / QM 6759 / NRRL 1006) (Penicillium stipitatum).